The sequence spans 394 residues: Penicillopepsin-2 (394 aa).

The N-terminal stretch at 1-20 (MVVFSKITVVLAGLATVASA) is a signal peptide. A propeptide spans 21–71 (VPTGTSRKSTFTVNQKARPVAQAKAINLPGMYASALSKYGAAVPASVKAAA) (activation peptide). The region spanning 87–391 (YLTPVNVGGT…DANGPRLGFA (305 aa)) is the Peptidase A1 domain. Residue aspartate 103 is part of the active site. A glycan (N-linked (GlcNAc...) asparagine) is linked at asparagine 132. Residue aspartate 283 is part of the active site. Cysteine 319 and cysteine 354 are joined by a disulfide.

It belongs to the peptidase A1 family. As to quaternary structure, monomer.

The protein localises to the secreted. The catalysed reaction is Hydrolysis of proteins with broad specificity similar to that of pepsin A, preferring hydrophobic residues at P1 and P1', but also cleaving 20-Gly-|-Glu-21 in the B chain of insulin. Clots milk, and activates trypsinogen.. Its function is as follows. Secreted aspartic endopeptidase that allows assimilation of proteinaceous substrates. The scissile peptide bond is attacked by a nucleophilic water molecule activated by two aspartic residues in the active site. Shows a broad primary substrate specificity. Favors hydrophobic residues at the P1 and P1' positions, but can also activate trypsinogen and hydrolyze the B chain of insulin between positions 'Gly-20' and 'Glu-21'. The protein is Penicillopepsin-2 of Penicillium janthinellum (Penicillium vitale).